Consider the following 268-residue polypeptide: Uronate dehydrogenase (268 aa).

NAD(+) is bound by residues 17-18, 37-39, 55-56, and 75-79; these read GL, DIS, DL, and FGGVS. Residues serine 79 and 115-117 each bind substrate; that span reads SNH. Tyrosine 140 acts as the Proton acceptor in catalysis. Lysine 144 contacts NAD(+). Serine 169 serves as a coordination point for substrate. Serine 170 provides a ligand contact to NAD(+). Arginine 178 is a binding site for substrate.

This sequence belongs to the NAD(P)-dependent epimerase/dehydratase family. As to quaternary structure, homohexamer.

It carries out the reaction beta-D-galacturonate + NAD(+) = D-galactaro-1,5-lactone + NADH + H(+). It catalyses the reaction beta-D-glucuronate + NAD(+) = D-glucaro-1,5-lactone + NADH + H(+). Its pathway is carbohydrate acid metabolism; D-galacturonate degradation via prokaryotic oxidative pathway. Functionally, catalyzes the oxidation of beta-D-galacturonate and beta-D-glucuronate to galactarate and D-glucarate, respectively. The polypeptide is Uronate dehydrogenase (udh) (Pseudomonas putida (strain ATCC 47054 / DSM 6125 / CFBP 8728 / NCIMB 11950 / KT2440)).